The chain runs to 263 residues: 4-hydroxy-2-oxo-heptane-1,7-dioate aldolase (263 aa).

Residue His45 is the Proton acceptor of the active site. Residue Gln147 coordinates substrate. Glu149 is a binding site for a divalent metal cation. Ala174 and Asp175 together coordinate substrate. Asp175 contributes to the a divalent metal cation binding site.

Belongs to the HpcH/HpaI aldolase family. Homohexamer; trimer of dimers. A divalent metal cation serves as cofactor.

The enzyme catalyses 4-hydroxy-2-oxoheptanedioate = succinate semialdehyde + pyruvate. Its pathway is aromatic compound metabolism; 4-hydroxyphenylacetate degradation; pyruvate and succinate semialdehyde from 4-hydroxyphenylacetate: step 7/7. Functionally, catalyzes the reversible retro-aldol cleavage of 4-hydroxy-2-ketoheptane-1,7-dioate (HKHD) to pyruvate and succinic semialdehyde. This is 4-hydroxy-2-oxo-heptane-1,7-dioate aldolase from Salmonella heidelberg (strain SL476).